A 446-amino-acid polypeptide reads, in one-letter code: ATP-dependent protease ATPase subunit HslU (446 aa).

Residues Val17, 59 to 64, Asp255, Glu320, and Arg392 each bind ATP; that span reads GVGKTE.

It belongs to the ClpX chaperone family. HslU subfamily. As to quaternary structure, a double ring-shaped homohexamer of HslV is capped on each side by a ring-shaped HslU homohexamer. The assembly of the HslU/HslV complex is dependent on binding of ATP.

It is found in the cytoplasm. Its function is as follows. ATPase subunit of a proteasome-like degradation complex; this subunit has chaperone activity. The binding of ATP and its subsequent hydrolysis by HslU are essential for unfolding of protein substrates subsequently hydrolyzed by HslV. HslU recognizes the N-terminal part of its protein substrates and unfolds these before they are guided to HslV for hydrolysis. The chain is ATP-dependent protease ATPase subunit HslU from Azotobacter vinelandii (strain DJ / ATCC BAA-1303).